Reading from the N-terminus, the 278-residue chain is Soluble NSF attachment protein homolog FPV011 (278 aa).

Belongs to the SNAP family.

The chain is Soluble NSF attachment protein homolog FPV011 from Fowlpox virus (strain NVSL) (FPV).